The following is a 512-amino-acid chain: Mannose-1-phosphate guanylyltransferase (512 aa).

This sequence belongs to the mannose-6-phosphate isomerase type 2 family.

It carries out the reaction alpha-D-mannose 1-phosphate + GTP + H(+) = GDP-alpha-D-mannose + diphosphate. This Sinorhizobium fredii (strain NBRC 101917 / NGR234) protein is Mannose-1-phosphate guanylyltransferase (noeJ).